Reading from the N-terminus, the 302-residue chain is ATP synthase gamma chain (302 aa).

The protein belongs to the ATPase gamma chain family. As to quaternary structure, F-type ATPases have 2 components, CF(1) - the catalytic core - and CF(0) - the membrane proton channel. CF(1) has five subunits: alpha(3), beta(3), gamma(1), delta(1), epsilon(1). CF(0) has three main subunits: a, b and c.

Its subcellular location is the cell membrane. Its function is as follows. Produces ATP from ADP in the presence of a proton gradient across the membrane. The gamma chain is believed to be important in regulating ATPase activity and the flow of protons through the CF(0) complex. The polypeptide is ATP synthase gamma chain (Enterococcus faecalis (strain ATCC 700802 / V583)).